A 228-amino-acid chain; its full sequence is GrpE protein homolog, mitochondrial (228 aa).

Residues 46-57 (DEAKSEESKENN) show a composition bias toward basic and acidic residues. The disordered stretch occupies residues 46–66 (DEAKSEESKENNEDLTEEQSE).

Belongs to the GrpE family. In terms of assembly, component of the PAM complex, at least composed of SSC1 (mtHsp70), MGE1, TIM44, PAM16/TIM16, PAM17 and PAM18/TIM14. Interacts with SSQ1. The N-terminus is blocked.

The protein localises to the mitochondrion matrix. In terms of biological role, essential component of the PAM complex, a complex required for the translocation of transit peptide-containing proteins from the inner membrane into the mitochondrial matrix in an ATP-dependent manner. Seems to control the nucleotide-dependent binding of SSC1 to substrate proteins and the association of SSC1 with TIM44. The chain is GrpE protein homolog, mitochondrial (MGE1) from Saccharomyces cerevisiae (strain ATCC 204508 / S288c) (Baker's yeast).